The chain runs to 644 residues: Serine/threonine kinase YeaG (644 aa).

This sequence belongs to the PrkA family. Monomer.

Its subcellular location is the cytoplasm. The enzyme catalyses L-seryl-[protein] + ATP = O-phospho-L-seryl-[protein] + ADP + H(+). It catalyses the reaction L-threonyl-[protein] + ATP = O-phospho-L-threonyl-[protein] + ADP + H(+). Kinase that plays a role in the adaptation to sustained nitrogen starvation. The sequence is that of Serine/threonine kinase YeaG (yeaG) from Escherichia coli O157:H7.